The sequence spans 360 residues: Peptide chain release factor 1 (360 aa).

Gln235 bears the N5-methylglutamine mark. A disordered region spans residues 284–313; the sequence is AKRQQAEASTRRNLLGSGDRSDRNRTYNFP.

It belongs to the prokaryotic/mitochondrial release factor family. Post-translationally, methylated by PrmC. Methylation increases the termination efficiency of RF1.

Its subcellular location is the cytoplasm. Peptide chain release factor 1 directs the termination of translation in response to the peptide chain termination codons UAG and UAA. The polypeptide is Peptide chain release factor 1 (Salmonella arizonae (strain ATCC BAA-731 / CDC346-86 / RSK2980)).